We begin with the raw amino-acid sequence, 353 residues long: MESMPVAPSTDPRVARLIDANLDRAREGLRVIEDWCRFGLDRQDLVVPLKDWRQQLGQLHHDRYRQARSTATDSAAGLGHPAQDTRTDSVAIVKANASRVQEALRVIEEFARNGDAVLARTAAAVRYALYDHEVRILEACGHSRRKQQLEDARLCLITDPGADDGCERLVQRVEAALQSGVSLVQYRRKHGSDGLRLQEAQQLAQLCHEHNALFIVNDRIDLALLVNADGVHLGQEDLPYREARRLLGSAKLIGRSTHKLAQLHEAQEQGADYVGVGPVFATATKADRHPAGLSWVKEACEAARIPWFAIGGITATTLPRVREAGAQRVAVVSAIMASEDPASASRQLLDLLT.

The tract at residues 1–128 (MESMPVAPST…ARTAAAVRYA (128 aa)) is unknown. Positions 129 to 353 (LYDHEVRILE…ASRQLLDLLT (225 aa)) are thiamine-phosphate synthase. Residues 185 to 189 (QYRRK) and Asn217 each bind 4-amino-2-methyl-5-(diphosphooxymethyl)pyrimidine. Asp218 and Asp237 together coordinate Mg(2+). Ser256 lines the 4-amino-2-methyl-5-(diphosphooxymethyl)pyrimidine pocket. 2-[(2R,5Z)-2-carboxy-4-methylthiazol-5(2H)-ylidene]ethyl phosphate is bound at residue 282-284 (TAT). Lys285 contacts 4-amino-2-methyl-5-(diphosphooxymethyl)pyrimidine. 2-[(2R,5Z)-2-carboxy-4-methylthiazol-5(2H)-ylidene]ethyl phosphate contacts are provided by residues Gly312 and 332–333 (VS).

This sequence belongs to the thiamine-phosphate synthase family. The cofactor is Mg(2+).

The enzyme catalyses 2-[(2R,5Z)-2-carboxy-4-methylthiazol-5(2H)-ylidene]ethyl phosphate + 4-amino-2-methyl-5-(diphosphooxymethyl)pyrimidine + 2 H(+) = thiamine phosphate + CO2 + diphosphate. It carries out the reaction 2-(2-carboxy-4-methylthiazol-5-yl)ethyl phosphate + 4-amino-2-methyl-5-(diphosphooxymethyl)pyrimidine + 2 H(+) = thiamine phosphate + CO2 + diphosphate. It catalyses the reaction 4-methyl-5-(2-phosphooxyethyl)-thiazole + 4-amino-2-methyl-5-(diphosphooxymethyl)pyrimidine + H(+) = thiamine phosphate + diphosphate. Its pathway is cofactor biosynthesis; thiamine diphosphate biosynthesis; thiamine phosphate from 4-amino-2-methyl-5-diphosphomethylpyrimidine and 4-methyl-5-(2-phosphoethyl)-thiazole: step 1/1. Condenses 4-methyl-5-(beta-hydroxyethyl)thiazole monophosphate (THZ-P) and 2-methyl-4-amino-5-hydroxymethyl pyrimidine pyrophosphate (HMP-PP) to form thiamine monophosphate (TMP). The sequence is that of Thiamine-phosphate synthase from Synechococcus sp. (strain WH7803).